Here is a 1311-residue protein sequence, read N- to C-terminus: DENN domain-containing protein 5B (1311 aa).

A uDENN domain is found at 53–270 (ATAAGENFDQ…EVPLPASGRS (218 aa)). Over residues 154-165 (QAEHNTSAQNCT) the composition is skewed to polar residues. A disordered region spans residues 154–201 (QAEHNTSAQNCTSSSSSSSSSSSSSSMDSLSSSLDDVDSPSAHGGRRT). Residues 166-187 (SSSSSSSSSSSSSSMDSLSSSL) show a composition bias toward low complexity. The cDENN domain occupies 289–452 (ELPLADFPLA…AVMSLQTSVL (164 aa)). Positions 454 to 619 (KELKSTSLRE…DNKIMSQWEE (166 aa)) constitute a dDENN domain. The region spanning 809 to 969 (LEENTLIASL…DYFCFTSVFT (161 aa)) is the RUN 1 domain. The segment at 854-874 (EQQLESPVSNGQERRKTESSV) is disordered. The helical transmembrane segment at 962 to 982 (FCFTSVFTTIMIPYRAVIIPI) threads the bilayer. Residues 973–1081 (IPYRAVIIPI…DDGSLERVLI (109 aa)) form the PLAT domain. The RUN 2 domain maps to 1155 to 1306 (TVLLCGEGGL…FPITLETSLT (152 aa)).

This sequence belongs to the RAB6IP1 family.

The protein resides in the membrane. In terms of biological role, guanine nucleotide exchange factor (GEF) which may activate the small GTPases Rab. May promote the exchange of GDP to GTP, converting inactive GDP-bound Rab proteins into their active GTP-bound form. This chain is DENN domain-containing protein 5B (dennd5b), found in Danio rerio (Zebrafish).